The chain runs to 597 residues: Phragmoplastin interacting protein 1 (597 aa).

The disordered stretch occupies residues 18 to 136; the sequence is ESLSVSVSET…KTPKKAEEGN (119 aa). A compositionally biased stretch (polar residues) spans 20 to 29; the sequence is LSVSVSETNP. Residues 30 to 40 are compositionally biased toward low complexity; that stretch reads QSQSLKLLLDS. Composition is skewed to basic residues over residues 43 to 53 and 112 to 129; these read HKPRLSKREKR and QKKK…NKTP. The Nuclear localization signal signature appears at 112–119; the sequence is QKKKNKKK. RRM domains are found at residues 161 to 238 and 262 to 338; these read NKLY…QYVK and NRVY…CALK. CCHC-type zinc fingers lie at residues 397 to 411, 481 to 495, and 576 to 591; these read CYEC…TACP and CYEC…ACPN.

Interacts with phragmoplastins (e.g. DRP1A, DRP1B, DRP1C, DRP1D and DRP1E) and with GTP-bound ARAC11/ROP1 as well as with Ran2 transcripts.

Its subcellular location is the nucleus. It localises to the cell membrane. It is found in the cytoplasm. The protein resides in the cytoskeleton. The protein localises to the phragmoplast. Functionally, RNA-binding protein which mediates polarized mRNA (e.g. Ran2 transcripts mRNA) transport from the nucleus to the vicinity of the cell plate during cytokinesis and phragmoplast formation. This is Phragmoplastin interacting protein 1 from Arabidopsis thaliana (Mouse-ear cress).